Consider the following 196-residue polypeptide: Probable thymidylate kinase (196 aa).

Residue 7–14 (GIDGAGKT) participates in ATP binding.

It belongs to the thymidylate kinase family.

The catalysed reaction is dTMP + ATP = dTDP + ADP. The polypeptide is Probable thymidylate kinase (tmk) (Archaeoglobus fulgidus (strain ATCC 49558 / DSM 4304 / JCM 9628 / NBRC 100126 / VC-16)).